We begin with the raw amino-acid sequence, 445 residues long: UPF0210 protein Sez_0396 (445 aa).

The protein belongs to the UPF0210 family. Homodimer.

The protein is UPF0210 protein Sez_0396 of Streptococcus equi subsp. zooepidemicus (strain MGCS10565).